The primary structure comprises 742 residues: Envelope glycoprotein H (742 aa).

The first 23 residues, 1–23, serve as a signal peptide directing secretion; the sequence is MRPGLPSYLIILAVCLFSHLLSS. Over 24-719 the chain is Virion surface; that stretch reads RYGAEAVSEP…VVDATDSRLL (696 aa). Residues Asn55, Asn62, Asn67, and Asn192 are each glycosylated (N-linked (GlcNAc...) asparagine; by host). A disulfide bond links Cys195 and Cys211. Residues 217 to 280 are interaction with gL; the sequence is YLIDELRYVK…QTEKHELLVL (64 aa). 3 cysteine pairs are disulfide-bonded: Cys330–Cys383, Cys495–Cys522, and Cys571–Cys624. Residues Asn641 and Asn700 are each glycosylated (N-linked (GlcNAc...) asparagine; by host). A helical membrane pass occupies residues 720 to 740; the sequence is MMSVYALSAIIGIYLLYRMLK. At 741 to 742 the chain is on the intravirion side; that stretch reads TC.

It belongs to the herpesviridae glycoprotein H family. Interacts with glycoprotein L (gL); this interaction is necessary for the correct processing and cell surface expression of gH. The heterodimer gH/gL seems to interact with gB trimers during fusion. Forms the envelope pentamer complex (PC) composed of gH, gL, UL128, UL130, and UL131A. The pentamer interacts with host NRP2. Forms the envelope trimer complex composed of gH, gL, and gO. The trimer interacts with host PDGFRA. The trimer also interacts with host EPHA2. The trimer also interacts with host TGFBR3. Interacts with UL116. Post-translationally, N-glycosylated, O-glycosylated, and sialylated.

Its subcellular location is the virion membrane. The protein resides in the host cell membrane. The protein localises to the host endosome membrane. Functionally, the heterodimer glycoprotein H-glycoprotein L is required for the fusion of viral and plasma membranes leading to virus entry into the host cell. Following initial binding to host receptor, membrane fusion is mediated by the fusion machinery composed of gB and the heterodimer gH/gL. May also be involved in the fusion between the virion envelope and the outer nuclear membrane during virion morphogenesis. In human cytomegalovirus, forms two distincts complexes to mediate viral entry, a trimer and a pentamer at the surface of the virion envelope. The gH-gL-gO trimer is required for infection in fibroblasts by interacting with host PDGFRA, and in glioblastoma cells by interacting with host EPHA2. Thsi trimer may also be required in other cell types using host TGFBR3. The gH-gL-UL128-UL130-UL131A pentamer is essential for viral entry in epithelial, endothelial and myeloid cells via interaction with host NRP2. This Human cytomegalovirus (strain Merlin) (HHV-5) protein is Envelope glycoprotein H.